We begin with the raw amino-acid sequence, 129 residues long: MAQNKTIAVALLLATLVAVMGKEPETLEEAVRAGCKEECSEQKKKAPIDEKQCEDFCFIKTKSIFEAHKGVKDLKADRFIDFCNNECNAVYKEDPATSKKCAESCEADAKEAEVFLDKVVAYIQTTKQA.

An N-terminal signal peptide occupies residues methionine 1 to glycine 21.

This is an uncharacterized protein from Oryza sativa subsp. japonica (Rice).